The primary structure comprises 208 residues: Redox-sensing transcriptional repressor Rex (208 aa).

The segment at residues 16 to 55 is a DNA-binding region (H-T-H motif); that stretch reads VYSRYLENLYRKGITTVSSADIAQGVGVTSAQVRKDLAYF. 90 to 95 lines the NAD(+) pocket; the sequence is GAGNLG.

It belongs to the transcriptional regulatory Rex family. Homodimer.

The protein localises to the cytoplasm. Functionally, modulates transcription in response to changes in cellular NADH/NAD(+) redox state. The chain is Redox-sensing transcriptional repressor Rex from Carboxydothermus hydrogenoformans (strain ATCC BAA-161 / DSM 6008 / Z-2901).